The primary structure comprises 1042 residues: Serine/threonine-protein kinase LATS2 (1042 aa).

Positions 23 to 44 (REGLKQPSKASTQGLLVGPNSD) are disordered. The segment covering 30-44 (SKASTQGLLVGPNSD) has biased composition (polar residues). Residue serine 82 is modified to Phosphoserine; by AURKA. A UBA domain is found at 97–138 (EVNRQMLQELVNAGCDQEMAGRALKQTGSRSIEAALEYISKM). The interaction with ubiquitinated AMOTL2 stretch occupies residues 100-140 (RQMLQELVNAGCDQEMAGRALKQTGSRSIEAALEYISKMGY). The interval 237 to 282 (HFPGTHYGRGHLLSEQPGYGVQRSSSFQNKTPPDAYSSMAKAQGGP) is disordered. Positions 258–267 (QRSSSFQNKT) are enriched in polar residues. Position 267 is a phosphothreonine (threonine 267). Serine 362 carries the post-translational modification Phosphoserine. Disordered stretches follow at residues 378-399 (RAGP…LPAP), 442-481 (PATE…HLLL), and 501-550 (QSLR…KRES). Positions 472 to 475 (PPPY) match the PPxY motif motif. Over residues 507-530 (TEQDRSDKSHKGAKGDKAGRDKKQ) the composition is skewed to basic and acidic residues. Serine 534 is subject to Phosphoserine. Residues 541–550 (NSRDEEKRES) show a composition bias toward basic and acidic residues. Positions 626–931 (FVKIKTLGIG…ADDLKAHPFF (306 aa)) constitute a Protein kinase domain. ATP is bound by residues 632-640 (LGIGAFGEV) and lysine 655. Aspartate 749 functions as the Proton acceptor in the catalytic mechanism. One can recognise an AGC-kinase C-terminal domain in the interval 932 to 1010 (NTIDFSRDIR…RRFFDDNGYP (79 aa)). Residue threonine 999 is modified to Phosphothreonine. The interval 1014-1042 (PKPSEPAESADPGDADLEGAAEGCQPVYV) is disordered.

Belongs to the protein kinase superfamily. AGC Ser/Thr protein kinase family. As to quaternary structure, interacts with and is phosphorylated by AURKA. Binds to AR. Interacts with AJUBA during mitosis and this complex regulates organization of the spindle apparatus through recruitment of gamma-tubulin to the centrosome. Interacts (via PPxY motif) with YAP1 (via WW domains). Interacts with MOB1A and MOB1B. Interacts with LIMD1, WTIP and AJUBA. Interacts with SNAI1. Interacts with WWC1, WWC2 and WWC3 (via their WW domains). Interacts (via UBA domain) with ubiquitinated AMOTL2; the interaction promotes LATS2 phosphorylation of YAP1. Mg(2+) serves as cofactor. In terms of processing, autophosphorylated and phosphorylated during M-phase and the G1/S-phase of the cell cycle. Phosphorylated and activated by STK3/MST2. Phosphorylated by MAP4Ks; in parallel to STK3/MST2 and resulting to its activation. Phosphorylation by NUAK2 may regulate its activity in phosphorylation and inactivation YAP1. As to expression, expressed at high levels in ovary and testis and at lower levels in all other tissues examined.

It is found in the cytoplasm. The protein localises to the cytoskeleton. The protein resides in the microtubule organizing center. Its subcellular location is the centrosome. It localises to the spindle pole. It is found in the nucleus. It catalyses the reaction L-seryl-[protein] + ATP = O-phospho-L-seryl-[protein] + ADP + H(+). It carries out the reaction L-threonyl-[protein] + ATP = O-phospho-L-threonyl-[protein] + ADP + H(+). Negative regulator of YAP1 in the Hippo signaling pathway that plays a pivotal role in organ size control and tumor suppression by restricting proliferation and promoting apoptosis. The core of this pathway is composed of a kinase cascade wherein STK3/MST2 and STK4/MST1, in complex with its regulatory protein SAV1, phosphorylates and activates LATS1/2 in complex with its regulatory protein MOB1, which in turn phosphorylates and inactivates YAP1 oncoprotein and WWTR1/TAZ. Phosphorylation of YAP1 by LATS2 inhibits its translocation into the nucleus to regulate cellular genes important for cell proliferation, cell death, and cell migration. Also phosphorylates YAP1 in response to cell contact inhibition-driven WWP1 ubiquitination of AMOTL2, which results in LATS2 activation. Acts as a tumor suppressor which plays a critical role in centrosome duplication, maintenance of mitotic fidelity and genomic stability. Negatively regulates G1/S transition by down-regulating cyclin E/CDK2 kinase activity. Negative regulator of the androgen receptor. Phosphorylates SNAI1 in the nucleus leading to its nuclear retention and stabilization, which enhances its epithelial-mesenchymal transition and tumor cell invasion/migration activities. This tumor-promoting activity is independent of its effects upon YAP1 or WWTR1/TAZ. Acts as an activator of the NLRP3 inflammasome by mediating phosphorylation of 'Ser-265' of NLRP3 following NLRP3 palmitoylation, promoting NLRP3 activation by NEK7. The protein is Serine/threonine-protein kinase LATS2 of Mus musculus (Mouse).